A 142-amino-acid polypeptide reads, in one-letter code: Ribosome-binding factor A (142 aa).

The segment at Thr120–Thr142 is disordered. A compositionally biased stretch (polar residues) spans Glu123–Thr142.

Belongs to the RbfA family. As to quaternary structure, monomer. Binds 30S ribosomal subunits, but not 50S ribosomal subunits or 70S ribosomes.

It is found in the cytoplasm. Its function is as follows. One of several proteins that assist in the late maturation steps of the functional core of the 30S ribosomal subunit. Associates with free 30S ribosomal subunits (but not with 30S subunits that are part of 70S ribosomes or polysomes). Required for efficient processing of 16S rRNA. May interact with the 5'-terminal helix region of 16S rRNA. This Prochlorococcus marinus (strain MIT 9313) protein is Ribosome-binding factor A.